The chain runs to 161 residues: Nucleotide-binding protein Tcr_1902 (161 aa).

Belongs to the YajQ family.

Nucleotide-binding protein. In Hydrogenovibrio crunogenus (strain DSM 25203 / XCL-2) (Thiomicrospira crunogena), this protein is Nucleotide-binding protein Tcr_1902.